Reading from the N-terminus, the 205-residue chain is ATP phosphoribosyltransferase (205 aa).

Belongs to the ATP phosphoribosyltransferase family. Short subfamily. Heteromultimer composed of HisG and HisZ subunits.

The protein resides in the cytoplasm. The enzyme catalyses 1-(5-phospho-beta-D-ribosyl)-ATP + diphosphate = 5-phospho-alpha-D-ribose 1-diphosphate + ATP. It participates in amino-acid biosynthesis; L-histidine biosynthesis; L-histidine from 5-phospho-alpha-D-ribose 1-diphosphate: step 1/9. In terms of biological role, catalyzes the condensation of ATP and 5-phosphoribose 1-diphosphate to form N'-(5'-phosphoribosyl)-ATP (PR-ATP). Has a crucial role in the pathway because the rate of histidine biosynthesis seems to be controlled primarily by regulation of HisG enzymatic activity. The sequence is that of ATP phosphoribosyltransferase from Leptospira interrogans serogroup Icterohaemorrhagiae serovar Lai (strain 56601).